Here is a 751-residue protein sequence, read N- to C-terminus: Protein CLMP1 (751 aa).

Residues 1-11 are compositionally biased toward basic residues; that stretch reads MGKSGGRKKKS. Residues 1–33 form a disordered region; it reads MGKSGGRKKKSGGSNSNSSQVNSSETSGLSKPS. Low complexity predominate over residues 12 to 28; sequence GGSNSNSSQVNSSETSG. TPR repeat units lie at residues 51 to 84, 89 to 124, and 125 to 158; these read AHEL…IPKS, AVFH…QPGF, and TRAL…DPNH. A PB1 domain is found at 290–382; sequence WRPLKFVYDH…GMLRLHVVDV (93 aa). The interval 386–443 is disordered; it reads QEPMLLEEEEEEVEEKPVIEEVISSPTESLSETEINTEKTDKEVEKEKASSSEDPETK. Over residues 390–399 the composition is skewed to acidic residues; the sequence is LLEEEEEEVE. The segment covering 409 to 419 has biased composition (polar residues); it reads SSPTESLSETE. Positions 421–443 are enriched in basic and acidic residues; the sequence is NTEKTDKEVEKEKASSSEDPETK. TPR repeat units follow at residues 434–468, 481–514, and 536–570; these read ASSS…DPDA, SEAL…AFFN, and EVVA…KPDF. Over residues 630-648 the composition is skewed to basic and acidic residues; sequence EQRMDDLKNPNSNKKEEVS. The disordered stretch occupies residues 630-663; that stretch reads EQRMDDLKNPNSNKKEEVSKRRKKQGGDGNEEVS.

As to quaternary structure, interacts with myosin XI-K. In terms of tissue distribution, expressed in roots, stems, leaves, apex, flowers and seeds. Detected throughout the petiole in juvenile and young leaves, but restricted to the petiole midvein in older leaves. Expressed in hydathodes, at the base of the trichome, in the vascular cylinder of primary root and lateral root, in emerging lateral root primordia, in pollen and in developing embryos, but not in mature embryos.

The protein localises to the cytoplasm. In terms of biological role, required for plastid separation and partitioning during cell division. Not involved in plastid constriction or in the organization of cytoplasmic actin cables. Contributes to polar growth of root hairs. This Arabidopsis thaliana (Mouse-ear cress) protein is Protein CLMP1.